A 67-amino-acid chain; its full sequence is Large ribosomal subunit protein bL35 (67 aa).

This sequence belongs to the bacterial ribosomal protein bL35 family.

This chain is Large ribosomal subunit protein bL35, found in Paramagnetospirillum magneticum (strain ATCC 700264 / AMB-1) (Magnetospirillum magneticum).